The primary structure comprises 344 residues: S-adenosylmethionine:tRNA ribosyltransferase-isomerase (344 aa).

It belongs to the QueA family. Monomer.

The protein localises to the cytoplasm. It carries out the reaction 7-aminomethyl-7-carbaguanosine(34) in tRNA + S-adenosyl-L-methionine = epoxyqueuosine(34) in tRNA + adenine + L-methionine + 2 H(+). It functions in the pathway tRNA modification; tRNA-queuosine biosynthesis. Its function is as follows. Transfers and isomerizes the ribose moiety from AdoMet to the 7-aminomethyl group of 7-deazaguanine (preQ1-tRNA) to give epoxyqueuosine (oQ-tRNA). In Rhizorhabdus wittichii (strain DSM 6014 / CCUG 31198 / JCM 15750 / NBRC 105917 / EY 4224 / RW1) (Sphingomonas wittichii), this protein is S-adenosylmethionine:tRNA ribosyltransferase-isomerase.